A 150-amino-acid chain; its full sequence is D-aminoacyl-tRNA deacylase (150 aa).

The short motif at G136–P137 is the Gly-cisPro motif, important for rejection of L-amino acids element.

It belongs to the DTD family. In terms of assembly, homodimer.

The protein localises to the cytoplasm. The catalysed reaction is glycyl-tRNA(Ala) + H2O = tRNA(Ala) + glycine + H(+). It catalyses the reaction a D-aminoacyl-tRNA + H2O = a tRNA + a D-alpha-amino acid + H(+). An aminoacyl-tRNA editing enzyme that deacylates mischarged D-aminoacyl-tRNAs. Also deacylates mischarged glycyl-tRNA(Ala), protecting cells against glycine mischarging by AlaRS. Acts via tRNA-based rather than protein-based catalysis; rejects L-amino acids rather than detecting D-amino acids in the active site. By recycling D-aminoacyl-tRNA to D-amino acids and free tRNA molecules, this enzyme counteracts the toxicity associated with the formation of D-aminoacyl-tRNA entities in vivo and helps enforce protein L-homochirality. The sequence is that of D-aminoacyl-tRNA deacylase from Staphylococcus epidermidis (strain ATCC 35984 / DSM 28319 / BCRC 17069 / CCUG 31568 / BM 3577 / RP62A).